The sequence spans 415 residues: MSHKSAEMYELKKKVEELKSYRGRATELVSLYIPAGYDINKVMQQLREEYGTAQNIKSKSTRKNVLGALERAMQHLKLYRKTPENGLALFVGNVSEQEGVSDIKLWAIVPPEPLKVRLYRCDQTFVTEPLEEMLRVKDAYGLITVEKNEATIGLLRGKRIEVIDDLTSNVPGKTRAGGQSARRYERIREQETHEFMKRIAEHAAKAFLPLLEKGELKGIIIGGPGPTKEEFVDGDYLHHELRKKVIGVVDISYHGEYGLRELVEKASDILSEHEAVKERKLIQDFFRHLVKDTGLITYGEREVRKALELGAVDTLLISEGYDKVRVKAKCNACGWEELKTMSEQEFHVYKKKLTHCPKCGSQNISFEKWDVAEELIKLAEESGAEVEIISLDTEEGQQFYKAFGGLGAFLRYKIQ.

It belongs to the eukaryotic release factor 1 family. In terms of assembly, heterodimer of two subunits, one of which binds GTP.

The protein localises to the cytoplasm. Functionally, directs the termination of nascent peptide synthesis (translation) in response to the termination codons UAA, UAG and UGA. In Thermococcus onnurineus (strain NA1), this protein is Peptide chain release factor subunit 1.